Here is a 55-residue protein sequence, read N- to C-terminus: Large ribosomal subunit protein bL33 (55 aa).

It belongs to the bacterial ribosomal protein bL33 family.

The sequence is that of Large ribosomal subunit protein bL33 from Photorhabdus laumondii subsp. laumondii (strain DSM 15139 / CIP 105565 / TT01) (Photorhabdus luminescens subsp. laumondii).